A 284-amino-acid polypeptide reads, in one-letter code: Tropomyosin (284 aa).

A coiled-coil region spans residues 1-284; it reads MDAIKKKMLA…DQTFAELAGY (284 aa). Residues 202–213 are compositionally biased toward polar residues; the sequence is NNTKSLEISEQE. The tract at residues 202-223 is disordered; it reads NNTKSLEISEQEASQREDSYEE. The segment covering 214–223 has biased composition (basic and acidic residues); that stretch reads ASQREDSYEE.

The protein belongs to the tropomyosin family. Homodimer.

Tropomyosin, in association with the troponin complex, plays a central role in the calcium dependent regulation of muscle contraction. This chain is Tropomyosin, found in Haliotis rufescens (California red abalone).